We begin with the raw amino-acid sequence, 126 residues long: uncharacterized protein (126 aa).

Transmembrane regions (helical) follow at residues 21–43 and 48–70; these read LIVW…RIFS and SVTF…LLLL.

Its subcellular location is the membrane. This is an uncharacterized protein from Saccharomyces cerevisiae (strain ATCC 204508 / S288c) (Baker's yeast).